The primary structure comprises 236 residues: uncharacterized protein (236 aa).

Residues 1–23 form the signal peptide; it reads MRRILSILVFAIMLAGCSSNAST. Residues 22-62 are disordered; that stretch reads STEKQHAGGEKTVKAEPQSTSSQKDSTDDYQPNSQVTDDRT. Residues 24–35 show a composition bias toward basic and acidic residues; that stretch reads EKQHAGGEKTVK.

This is an uncharacterized protein from Bacillus subtilis (strain 168).